The chain runs to 255 residues: MSQEFLARILEQKAREVEQMKLEQIQPLRQTYRLAEFLKNHQDRLQVIAEVKKASPSLGDINLDVDIVQQAQTYEENGAVMISVLTDEVFFKGHLDYLREISSQVEIPTLNKDFIIDEKQIIRARNAGATVILLIVAALAEERLKELYDYATVLGLEVLVETHNLAELEVAHRLGAQIIGVNNRNLTTFEVDLQTSVDLAKHFKDDCLYISESAIFTRQDAERLAPYFNGILVGTALMQAENVVQRIKELQIDKG.

It belongs to the TrpC family.

It carries out the reaction 1-(2-carboxyphenylamino)-1-deoxy-D-ribulose 5-phosphate + H(+) = (1S,2R)-1-C-(indol-3-yl)glycerol 3-phosphate + CO2 + H2O. Its pathway is amino-acid biosynthesis; L-tryptophan biosynthesis; L-tryptophan from chorismate: step 4/5. The protein is Indole-3-glycerol phosphate synthase of Streptococcus pneumoniae (strain Hungary19A-6).